A 100-amino-acid chain; its full sequence is Small ribosomal subunit protein uS14c (100 aa).

Belongs to the universal ribosomal protein uS14 family. Part of the 30S ribosomal subunit.

It is found in the plastid. It localises to the chloroplast. Its function is as follows. Binds 16S rRNA, required for the assembly of 30S particles. The chain is Small ribosomal subunit protein uS14c from Tupiella akineta (Green alga).